A 177-amino-acid chain; its full sequence is Large ribosomal subunit protein eL20 (177 aa).

The protein belongs to the eukaryotic ribosomal protein eL20 family.

The sequence is that of Large ribosomal subunit protein eL20 (RpL18A) from Spodoptera frugiperda (Fall armyworm).